The chain runs to 27 residues: Cupiennin-3d (27 aa).

At glutamate 27 the chain carries Glutamic acid 1-amide.

As to expression, expressed by the venom gland.

It localises to the secreted. This chain is Cupiennin-3d, found in Cupiennius salei (American wandering spider).